Consider the following 941-residue polypeptide: Gamma-aminobutyric acid type B receptor subunit 2 (941 aa).

An N-terminal signal peptide occupies residues 1–41 (MASPRSSGQPGPPPPPPPPPARLLLLLLLPLLLPLAPGAWG). The Extracellular portion of the chain corresponds to 42–483 (WARGAPRPPP…LRKISLPLYS (442 aa)). Asparagine 90 carries an N-linked (GlcNAc...) asparagine glycan. 3 disulfides stabilise this stretch: cysteine 108/cysteine 135, cysteine 237/cysteine 266, and cysteine 265/cysteine 302. Asparagine 298, asparagine 389, asparagine 404, and asparagine 453 each carry an N-linked (GlcNAc...) asparagine glycan. Residues 484–504 (ILSALTILGMIMASAFLFFNI) traverse the membrane as a helical segment. Topologically, residues 505-522 (KNRNQKLIKMSSPYMNNL) are cytoplasmic. The chain crosses the membrane as a helical span at residues 523–543 (IILGGMLSYASIFLFGLDGSF). Residues 544–551 (VSEKTFET) are Extracellular-facing. A helical membrane pass occupies residues 552–572 (LCTVRTWILTVGYTTAFGAMF). Residues 573 to 597 (AKTWRVHAIFKNVKMKKKIIKDQKL) lie on the Cytoplasmic side of the membrane. The chain crosses the membrane as a helical span at residues 598–618 (LVIVGGMLLIDLCILICWQAV). Topologically, residues 619–654 (DPLRRTVEKYSMEPDPAGRDISIRPLLEHCENTHMT) are extracellular. A helical transmembrane segment spans residues 655–675 (IWLGIVYAYKGLLMLFGCFLA). Over 676–691 (WETRNVSIPALNDSKY) the chain is Cytoplasmic. A helical membrane pass occupies residues 692 to 712 (IGMSVYNVGIMCIIGAAVSFL). Residues 713–720 (TRDQPNVQ) lie on the Extracellular side of the membrane. Residues 721-741 (FCIVALVIIFCSTITLCLVFV) traverse the membrane as a helical segment. At 742–941 (PKLITLRTNP…PSFRVMVSGL (200 aa)) the chain is on the cytoplasmic side. The segment at 763-790 (TQNQKKEDSKTSTSVTSVNQASTSRLEG) is disordered. The segment covering 773–787 (TSTSVTSVNQASTSR) has biased composition (polar residues). Residues serine 776 and serine 779 each carry the phosphoserine modification. Positions 781–819 (NQASTSRLEGLQSENHRLRMKITELDKDLEEVTMQLQDT) form a coiled coil. Threonine 819 carries the post-translational modification Phosphothreonine. A phosphoserine mark is found at serine 884, serine 893, serine 913, serine 916, serine 920, and serine 924.

It belongs to the G-protein coupled receptor 3 family. GABA-B receptor subfamily. In terms of assembly, heterodimer of GABBR1 and GABBR2. Homodimers may form, but are inactive. Interacts (via C-terminus) with ATF4 (via leucine zipper domain). In terms of tissue distribution, highly expressed in brain, especially in cerebral cortex, thalamus, hippocampus, frontal, occipital and temporal lobe, occipital pole and cerebellum, followed by corpus callosum, caudate nucleus, spinal cord, amygdala and medulla. Weakly expressed in heart, testis and skeletal muscle.

The protein localises to the cell membrane. The protein resides in the postsynaptic cell membrane. In terms of biological role, component of a heterodimeric G-protein coupled receptor for GABA, formed by GABBR1 and GABBR2. Within the heterodimeric GABA receptor, only GABBR1 seems to bind agonists, while GABBR2 mediates coupling to G proteins. Ligand binding causes a conformation change that triggers signaling via guanine nucleotide-binding proteins (G proteins) and modulates the activity of down-stream effectors, such as adenylate cyclase. Signaling inhibits adenylate cyclase, stimulates phospholipase A2, activates potassium channels, inactivates voltage-dependent calcium-channels and modulates inositol phospholipid hydrolysis. Plays a critical role in the fine-tuning of inhibitory synaptic transmission. Pre-synaptic GABA receptor inhibits neurotransmitter release by down-regulating high-voltage activated calcium channels, whereas postsynaptic GABA receptor decreases neuronal excitability by activating a prominent inwardly rectifying potassium (Kir) conductance that underlies the late inhibitory postsynaptic potentials. Not only implicated in synaptic inhibition but also in hippocampal long-term potentiation, slow wave sleep, muscle relaxation and antinociception. The polypeptide is Gamma-aminobutyric acid type B receptor subunit 2 (GABBR2) (Homo sapiens (Human)).